The primary structure comprises 310 residues: Porphobilinogen deaminase (310 aa).

Residue Cys242 is modified to S-(dipyrrolylmethanemethyl)cysteine.

Belongs to the HMBS family. In terms of assembly, monomer. The cofactor is dipyrromethane.

It catalyses the reaction 4 porphobilinogen + H2O = hydroxymethylbilane + 4 NH4(+). Its pathway is porphyrin-containing compound metabolism; protoporphyrin-IX biosynthesis; coproporphyrinogen-III from 5-aminolevulinate: step 2/4. In terms of biological role, tetrapolymerization of the monopyrrole PBG into the hydroxymethylbilane pre-uroporphyrinogen in several discrete steps. The polypeptide is Porphobilinogen deaminase (Halorhodospira halophila (strain DSM 244 / SL1) (Ectothiorhodospira halophila (strain DSM 244 / SL1))).